Here is a 117-residue protein sequence, read N- to C-terminus: Type II secretion system protein I (117 aa).

A propeptide spans 1–6 (MKSKRG) (leader sequence). F7 carries the N-methylphenylalanine modification. Residues 7–27 (FTLLEVLVALAIFATAAISVI) traverse the membrane as a helical segment.

Belongs to the GSP I family. In terms of assembly, type II secretion is composed of four main components: the outer membrane complex, the inner membrane complex, the cytoplasmic secretion ATPase and the periplasm-spanning pseudopilus. Interacts with core component EpsG. Cleaved by prepilin peptidase. Post-translationally, methylated by prepilin peptidase at the amino group of the N-terminal phenylalanine once the leader sequence is cleaved by prepilin peptidase.

It is found in the cell inner membrane. In terms of biological role, component of the type II secretion system required for the energy-dependent secretion of extracellular factors such as proteases and toxins from the periplasm. Part of the pseudopilus tip complex that is critical for the recognition and binding of secretion substrates. The chain is Type II secretion system protein I (epsI) from Vibrio cholerae serotype O1 (strain ATCC 39315 / El Tor Inaba N16961).